The following is a 1372-amino-acid chain: DNA-directed RNA polymerase subunit beta' (1372 aa).

4 residues coordinate Zn(2+): C69, C71, C84, and C87. 3 residues coordinate Mg(2+): D460, D462, and D464. Residues C808, C882, C889, and C892 each contribute to the Zn(2+) site.

The protein belongs to the RNA polymerase beta' chain family. In terms of assembly, the RNAP catalytic core consists of 2 alpha, 1 beta, 1 beta' and 1 omega subunit. When a sigma factor is associated with the core the holoenzyme is formed, which can initiate transcription. The cofactor is Mg(2+). Requires Zn(2+) as cofactor.

It catalyses the reaction RNA(n) + a ribonucleoside 5'-triphosphate = RNA(n+1) + diphosphate. Its function is as follows. DNA-dependent RNA polymerase catalyzes the transcription of DNA into RNA using the four ribonucleoside triphosphates as substrates. In Rickettsia felis (strain ATCC VR-1525 / URRWXCal2) (Rickettsia azadi), this protein is DNA-directed RNA polymerase subunit beta'.